Consider the following 106-residue polypeptide: Small ribosomal subunit protein bS16 (106 aa).

Belongs to the bacterial ribosomal protein bS16 family.

This is Small ribosomal subunit protein bS16 from Wolbachia sp. subsp. Brugia malayi (strain TRS).